A 262-amino-acid chain; its full sequence is uncharacterized protein (262 aa).

3 helical membrane-spanning segments follow: residues 4 to 24 (LIVF…RFLG), 28 to 48 (VSRF…CLFR), and 62 to 82 (CYLA…SHIL). Residues 152 to 181 (EREARAQEHDRISAEVETITSACENLEAAM) adopt a coiled-coil conformation.

Its subcellular location is the mitochondrion membrane. This is an uncharacterized protein from Arabidopsis thaliana (Mouse-ear cress).